Here is a 461-residue protein sequence, read N- to C-terminus: Cysteine--tRNA ligase (461 aa).

Cys-28 is a Zn(2+) binding site. Positions 30–40 (ITVYDLCHIGH) match the 'HIGH' region motif. The Zn(2+) site is built by Cys-209, His-234, and Glu-238. The 'KMSKS' region motif lies at 266–270 (KMSKS). Residue Lys-269 participates in ATP binding.

This sequence belongs to the class-I aminoacyl-tRNA synthetase family. Monomer. Zn(2+) serves as cofactor.

It localises to the cytoplasm. It catalyses the reaction tRNA(Cys) + L-cysteine + ATP = L-cysteinyl-tRNA(Cys) + AMP + diphosphate. The polypeptide is Cysteine--tRNA ligase (Escherichia coli O127:H6 (strain E2348/69 / EPEC)).